Reading from the N-terminus, the 154-residue chain is Myoglobin (154 aa).

One can recognise a Globin domain in the interval 2–148 (GLSDGEWQLV…FRKDIAAKYK (147 aa)). At S4 the chain carries Phosphoserine. Residue H65 participates in nitrite binding. Position 65 (H65) interacts with O2. A Phosphothreonine modification is found at T68. H94 contributes to the heme b binding site.

The protein belongs to the globin family. Monomeric.

It is found in the cytoplasm. The protein resides in the sarcoplasm. The enzyme catalyses Fe(III)-heme b-[protein] + nitric oxide + H2O = Fe(II)-heme b-[protein] + nitrite + 2 H(+). It catalyses the reaction H2O2 + AH2 = A + 2 H2O. Its function is as follows. Monomeric heme protein which primary function is to store oxygen and facilitate its diffusion within muscle tissues. Reversibly binds oxygen through a pentacoordinated heme iron and enables its timely and efficient release as needed during periods of heightened demand. Depending on the oxidative conditions of tissues and cells, and in addition to its ability to bind oxygen, it also has a nitrite reductase activity whereby it regulates the production of bioactive nitric oxide. Under stress conditions, like hypoxia and anoxia, it also protects cells against reactive oxygen species thanks to its pseudoperoxidase activity. The polypeptide is Myoglobin (MB) (Peponocephala electra (Melon-headed whale)).